Reading from the N-terminus, the 89-residue chain is MAEHVVYVGNKPVMNYVLATLTQLNEGADEVVIKARGRAISRAVDVAEIVRNRFMPGVKVKEIKIDTEELESEQGRRSNVSTIEIVLAK.

This sequence belongs to the histone-like Alba family. As to quaternary structure, forms homodimers and homotetramers. Interacts with Alba 1.

It localises to the cytoplasm. It is found in the chromosome. Its function is as follows. Binds double-stranded DNA tightly but without sequence specificity. Involved in DNA compaction. The chain is DNA/RNA-binding protein Alba 2 from Archaeoglobus fulgidus (strain ATCC 49558 / DSM 4304 / JCM 9628 / NBRC 100126 / VC-16).